A 659-amino-acid polypeptide reads, in one-letter code: QWRF motif-containing protein 2 (659 aa).

Disordered stretches follow at residues 1 to 125 (MVAA…SVTV), 157 to 221 (SKKK…LDCG), 291 to 317 (DTDSVSSGSTNGVQECGSGVNGEISKS), 340 to 359 (RLQDPGSPLSSSPGLKTSSI), and 371 to 429 (SDAV…NAYN). Residues 42–72 (SPSPSHSVSSTTTTTTTTTTTTSSSSSSSSS) show a composition bias toward low complexity. The span at 90–102 (RSTTNSASNSIKT) shows a compositional bias: polar residues. The span at 172–190 (STPERRRSTPVRDQRENSK) shows a compositional bias: basic and acidic residues. 2 stretches are compositionally biased toward polar residues: residues 206 to 216 (SESVVPNSLSR) and 291 to 303 (DTDSVSSGSTNGV). Low complexity-rich tracts occupy residues 345-359 (GSPLSSSPGLKTSSI) and 401-418 (ATTTSSPARALSSPSRAR). Residues 468–471 (QWRF) carry the QWRF motif motif.

The protein belongs to the QWRF family.

The polypeptide is QWRF motif-containing protein 2 (QWRF2) (Arabidopsis thaliana (Mouse-ear cress)).